We begin with the raw amino-acid sequence, 229 residues long: 3,4-dihydroxy-2-butanone 4-phosphate synthase (229 aa).

Residues R28–E29, D33, R164–T168, and E188 contribute to the D-ribulose 5-phosphate site. Residue E29 coordinates Mg(2+). Residue H167 coordinates Mg(2+).

This sequence belongs to the DHBP synthase family. In terms of assembly, homodimer. Mg(2+) serves as cofactor. It depends on Mn(2+) as a cofactor.

It carries out the reaction D-ribulose 5-phosphate = (2S)-2-hydroxy-3-oxobutyl phosphate + formate + H(+). It participates in cofactor biosynthesis; riboflavin biosynthesis; 2-hydroxy-3-oxobutyl phosphate from D-ribulose 5-phosphate: step 1/1. Its function is as follows. Catalyzes the conversion of D-ribulose 5-phosphate to formate and 3,4-dihydroxy-2-butanone 4-phosphate. This chain is 3,4-dihydroxy-2-butanone 4-phosphate synthase, found in Methanothermobacter thermautotrophicus (strain ATCC 29096 / DSM 1053 / JCM 10044 / NBRC 100330 / Delta H) (Methanobacterium thermoautotrophicum).